A 58-amino-acid chain; its full sequence is Ribosome biogenesis protein Nop10 (58 aa).

Belongs to the NOP10 family.

In terms of biological role, involved in ribosome biogenesis; more specifically in 18S rRNA pseudouridylation and in cleavage of pre-rRNA. This is Ribosome biogenesis protein Nop10 from Methanobrevibacter smithii (strain ATCC 35061 / DSM 861 / OCM 144 / PS).